We begin with the raw amino-acid sequence, 478 residues long: NADH-quinone oxidoreductase subunit N (478 aa).

The next 14 helical transmembrane spans lie at 5-25, 37-57, 68-88, 99-119, 121-141, 156-176, 199-219, 231-251, 268-288, 293-313, 320-340, 365-385, 401-421, and 446-466; these read LASP…VGVA, MLTL…ALGL, FAVM…VLSL, FEFP…VSAS, FMTL…LAAF, FVLG…IYGF, LTVG…AAPF, PTPV…AMML, VVAL…IGQT, LMAY…AAGS, LLIY…CILA, ALLL…SGFF, LLWG…YYYL, and VVAV…APIL.

It belongs to the complex I subunit 2 family. NDH-1 is composed of 14 different subunits. Subunits NuoA, H, J, K, L, M, N constitute the membrane sector of the complex.

It localises to the cell inner membrane. The enzyme catalyses a quinone + NADH + 5 H(+)(in) = a quinol + NAD(+) + 4 H(+)(out). Its function is as follows. NDH-1 shuttles electrons from NADH, via FMN and iron-sulfur (Fe-S) centers, to quinones in the respiratory chain. The immediate electron acceptor for the enzyme in this species is believed to be ubiquinone. Couples the redox reaction to proton translocation (for every two electrons transferred, four hydrogen ions are translocated across the cytoplasmic membrane), and thus conserves the redox energy in a proton gradient. In Granulibacter bethesdensis (strain ATCC BAA-1260 / CGDNIH1), this protein is NADH-quinone oxidoreductase subunit N.